Reading from the N-terminus, the 156-residue chain is Transcription elongation factor GreA (156 aa).

The stretch at 2–27 forms a coiled coil; that stretch reads EKTFPMTKEGLDKLKAELENLKLVKR.

It belongs to the GreA/GreB family.

In terms of biological role, necessary for efficient RNA polymerase transcription elongation past template-encoded arresting sites. The arresting sites in DNA have the property of trapping a certain fraction of elongating RNA polymerases that pass through, resulting in locked ternary complexes. Cleavage of the nascent transcript by cleavage factors such as GreA or GreB allows the resumption of elongation from the new 3'terminus. GreA releases sequences of 2 to 3 nucleotides. This chain is Transcription elongation factor GreA, found in Lactococcus lactis subsp. cremoris (strain MG1363).